The primary structure comprises 1315 residues: Myopalladin (1315 aa).

Disordered stretches follow at residues 19 to 60, 81 to 145, 166 to 204, and 230 to 266; these read SYLA…DLPD, INHD…TQSK, HSSK…TERR, and EAKR…LGQP. Basic and acidic residues-rich tracts occupy residues 23-35 and 84-104; these read ETRH…RSRA and DPLE…DQTK. Ser-99 and Ser-129 each carry phosphoserine. Positions 166–180 are enriched in basic residues; sequence HSSKRIRPRACKNHK. Residues 184-199 are compositionally biased toward polar residues; it reads ESQNKVLQENSPTFSD. Residues 219-240 are a coiled coil; it reads DNELNHAIEQREAKRREAELAA. Thr-249 carries the post-translational modification Phosphothreonine. One can recognise an Ig-like 1 domain in the interval 267-357; the sequence is PRFTQKLRSR…DSTSAEIYIE (91 aa). Residues Cys-288 and Cys-339 are joined by a disulfide bond. Residues 359–392 are disordered; sequence VSSSDSEGDPNKEEMNRIQKPNEVSSPPTTSAAI. Positions 432–528 constitute an Ig-like 2 domain; sequence PVFTKMLQNL…GTVSSIAQLD (97 aa). Cys-453 and Cys-512 are oxidised to a cystine. Disordered regions lie at residues 535-652, 674-704, and 725-747; these read ISDN…VLAK, LQNT…SSKQ, and SSTS…NTPQ. Polar residues predominate over residues 609-623; sequence SSGSGAANTSQTRPN. Residue Ser-641 is modified to Phosphoserine. Over residues 725–741 the composition is skewed to low complexity; sequence SSTSTATVSPSSSPVFT. The residue at position 754 (Ser-754) is a Phosphoserine. Disordered stretches follow at residues 762–814 and 840–865; these read HPST…TPVS and NAMG…KAPQ. Pro residues predominate over residues 779-790; it reads PAPPSPAEPAAP. Phosphoserine is present on residues Ser-809 and Ser-814. Phosphoserine occurs at positions 903 and 924. 3 Ig-like domains span residues 941-1025, 1068-1157, and 1167-1257; these read PIFD…GRIS, PHFL…LELT, and PVIL…ARLD. Cys-1089 and Cys-1141 are oxidised to a cystine.

This sequence belongs to the myotilin/palladin family. Interacts with TTN/titin, NEB, NEBL, ACTN2 and CARP.

The protein localises to the cytoplasm. It is found in the nucleus. The protein resides in the myofibril. It localises to the sarcomere. Its subcellular location is the z line. Its function is as follows. Component of the sarcomere that tethers together nebulin (skeletal muscle) and nebulette (cardiac muscle) to alpha-actinin, at the Z lines. This is Myopalladin (Mypn) from Mus musculus (Mouse).